The sequence spans 229 residues: Potassium/proton antiporter CemA (229 aa).

Transmembrane regions (helical) follow at residues 7-27 (LASLRYLACLVFLPWGISISF) and 106-126 (IISHLLANFICFATPGAYFIL).

The protein belongs to the CemA family.

It is found in the plastid. The protein localises to the chloroplast inner membrane. The enzyme catalyses K(+)(in) + H(+)(out) = K(+)(out) + H(+)(in). Contributes to K(+)/H(+) antiport activity by supporting proton efflux to control proton extrusion and homeostasis in chloroplasts in a light-dependent manner to modulate photosynthesis. Prevents excessive induction of non-photochemical quenching (NPQ) under continuous-light conditions. Indirectly promotes efficient inorganic carbon uptake into chloroplasts. This is Potassium/proton antiporter CemA from Cycas taitungensis (Prince sago).